The primary structure comprises 733 residues: Histone-lysine N-methyltransferase, H3 lysine-36 specific (733 aa).

A disordered region spans residues 1–32 (MSKNQSVSASEDEKEILNNNAEGHKPQRLFDQ). Serine 10 bears the Phosphoserine mark. Positions 22-31 (EGHKPQRLFD) are enriched in basic and acidic residues. An AWS domain is found at 63–118 (NDFMECDCYEEFSDGVNHACDEDSDCINRLTLIECVNDLCSSCGNDCQNQRFQKKQ). Positions 120-237 (APIAIFKTKH…KGEEITFDYN (118 aa)) constitute an SET domain. The region spanning 244–260 (QAQKCYCEEPNCIGFLG) is the Post-SET domain. In terms of domain architecture, WW spans 475–507 (VRLPPGWEIIHENGRPLYYNAEQKTKLHYPPSG). Disordered regions lie at residues 504 to 548 (PPSG…EEYE) and 672 to 692 (KELK…GKRH). Positions 506–528 (SGSSKVFSSRSNTQVNSPSSSGI) are enriched in polar residues. A Phosphoserine modification is found at serine 522. Positions 548–630 (ERKKQKRLEY…TVSQSQRLEH (83 aa)) form a coiled coil. The segment at 619 to 718 (RKTVSQSQRL…KKQKKALALS (100 aa)) is binding to RNA polymerase II CTD. Positions 672–688 (KELKKDSSRAPPDDLTK) are enriched in basic and acidic residues.

It belongs to the class V-like SAM-binding methyltransferase superfamily. Histone-lysine methyltransferase family. SET2 subfamily. As to quaternary structure, interacts with the RNA polymerase II hyperphosphorylated CTD. Interacts with CYC8.

The protein resides in the nucleus. Its subcellular location is the chromosome. It carries out the reaction L-lysyl(36)-[histone H3] + 3 S-adenosyl-L-methionine = N(6),N(6),N(6)-trimethyl-L-lysyl(36)-[histone H3] + 3 S-adenosyl-L-homocysteine + 3 H(+). Histone methyltransferase that trimethylates histone H3 'Lys-36' forming H3K36me3. Involved in transcription elongation as well as in transcription repression. The methyltransferase activity requires the recruitment to the RNA polymerase II, which is CTK1 dependent. This is Histone-lysine N-methyltransferase, H3 lysine-36 specific (SET2) from Saccharomyces cerevisiae (strain ATCC 204508 / S288c) (Baker's yeast).